Reading from the N-terminus, the 137-residue chain is Large ribosomal subunit protein uL16c (137 aa).

Belongs to the universal ribosomal protein uL16 family. In terms of assembly, part of the 50S ribosomal subunit.

It localises to the plastid. The protein localises to the chloroplast. This Thalassiosira pseudonana (Marine diatom) protein is Large ribosomal subunit protein uL16c.